The primary structure comprises 124 residues: Fluoride-specific ion channel FluC (124 aa).

Transmembrane regions (helical) follow at residues 1-21, 36-56, 70-90, and 100-120; these read MLNT…RYGV, TMII…WFVV, TGIL…FLLI, and LYVI…FAII. Na(+) contacts are provided by G74 and T77.

Belongs to the fluoride channel Fluc/FEX (TC 1.A.43) family.

Its subcellular location is the cell inner membrane. It carries out the reaction fluoride(in) = fluoride(out). Na(+) is not transported, but it plays an essential structural role and its presence is essential for fluoride channel function. In terms of biological role, fluoride-specific ion channel. Important for reducing fluoride concentration in the cell, thus reducing its toxicity. In Methylobacterium sp. (strain 4-46), this protein is Fluoride-specific ion channel FluC.